Consider the following 283-residue polypeptide: Ribosomal RNA small subunit methyltransferase I (283 aa).

Belongs to the methyltransferase superfamily. RsmI family.

Its subcellular location is the cytoplasm. It catalyses the reaction cytidine(1402) in 16S rRNA + S-adenosyl-L-methionine = 2'-O-methylcytidine(1402) in 16S rRNA + S-adenosyl-L-homocysteine + H(+). Functionally, catalyzes the 2'-O-methylation of the ribose of cytidine 1402 (C1402) in 16S rRNA. This chain is Ribosomal RNA small subunit methyltransferase I, found in Haemophilus influenzae (strain ATCC 51907 / DSM 11121 / KW20 / Rd).